A 165-amino-acid polypeptide reads, in one-letter code: Small ribosomal subunit protein uS3m (165 aa).

A mitochondrion-targeting transit peptide spans 1-30; sequence MNFLKKLLPQVATEVQQLSRSGFHTSSVCC.

This sequence belongs to the universal ribosomal protein uS3 family. Component of the mitochondrial ribosome small subunit (28S) which comprises a 12S rRNA and about 30 distinct proteins.

It is found in the mitochondrion. The protein is Small ribosomal subunit protein uS3m (mRpS24) of Drosophila melanogaster (Fruit fly).